The sequence spans 126 residues: Fluoride-specific ion channel FluC (126 aa).

The next 4 helical transmembrane spans lie at 4-24 (ILAI…IGLW), 35-55 (YGTF…LTLI), 68-88 (MLVT…YESF), and 100-120 (IGYM…GVGL). Residues G75 and T78 each coordinate Na(+).

This sequence belongs to the fluoride channel Fluc/FEX (TC 1.A.43) family.

The protein resides in the cell membrane. It catalyses the reaction fluoride(in) = fluoride(out). With respect to regulation, na(+) is not transported, but it plays an essential structural role and its presence is essential for fluoride channel function. Its function is as follows. Fluoride-specific ion channel. Important for reducing fluoride concentration in the cell, thus reducing its toxicity. This chain is Fluoride-specific ion channel FluC, found in Chloroflexus aurantiacus (strain ATCC 29366 / DSM 635 / J-10-fl).